Reading from the N-terminus, the 452-residue chain is Keratin, type II cytoskeletal 80 (452 aa).

The head stretch occupies residues 1-82; it reads MAYRSCVVGF…DPAVQQQKNQ (82 aa). At serine 45 the chain carries Phosphoserine. Residues 82 to 118 are coil 1A; that stretch reads QEKEEMKALNDKFASLIGKVQALEQRNQLLETRWSFL. The IF rod domain occupies 83–394; the sequence is EKEEMKALND…KLMEGEESRM (312 aa). The linker 1 stretch occupies residues 119 to 135; it reads QGQGSATFDLSHHYETF. The segment at 136–227 is coil 1B; it reads QGRLQEELRK…TVYEQELKDL (92 aa). Positions 228–251 are linker 12; that stretch reads TAQVKDVSVTVGLDSRCHIDLSGI. The segment at 252-390 is coil 2; it reads VEEVKAQYDA…ATYHKLMEGE (139 aa). The segment at 391–452 is tail; it reads ESRMDLPSAT…YLSQESEASE (62 aa). The segment at 412–452 is disordered; sequence TASKSGLTKTSSRKKKNRRGPVIKITEMSEKYLSQESEASE. Positions 422–432 are enriched in basic residues; that stretch reads SSRKKKNRRGP. Residues 443–452 show a composition bias toward polar residues; sequence YLSQESEASE.

Belongs to the intermediate filament family. As to quaternary structure, heterotetramer of two type I and two type II keratins.

The chain is Keratin, type II cytoskeletal 80 (Krt80) from Mus musculus (Mouse).